The primary structure comprises 201 residues: MFTRADFEIFDDPTLKGRLNKIYTELDPKFEVFGAQLQNELAVATNREFTLHIAKHLRRFKNPPMNTWMALSESSRGYKMMPHFEVGFGDDRIFVWFALMAEMPDKTDYAPLLASQSEKLLSDFTDYDLSYDHMTKQKFPMSPDNLQLIQDKFAKTKKGEWLLGKVYLKDNPLFDHPEELMADIQTTLLKMVPLYELINAK.

It belongs to the UPF0637 family.

This chain is UPF0637 protein LCA_0842, found in Latilactobacillus sakei subsp. sakei (strain 23K) (Lactobacillus sakei subsp. sakei).